The sequence spans 444 residues: MSGTKLEDSPPCRNWSSAPELNETQEPFLNPTDYDDEEFLRYLWREYLHPKEYEWVLIAGYIIVFVVALIGNVLVCVAVWKNHHMRTVTNYFIVNLSLADVLVTITCLPATLVVDITETWFFGQSLCKVIPYLQTVSVSVSVLTLSCIALDRWYAICHPLMFKSTAKRARNSIVIIWIVSCIIMIPQAIVMECSTMLPGLANKTTLFTVCDERWGGEIYPKMYHICFFLVTYMAPLCLMVLAYLQIFRKLWCRQIPGTSSVVQRKWKPLQPVSQPRGPGQQTKSRISAVAAEIKQIRARRKTARMLMVVLLVFAICYLPISILNVLKRVFGMFTHTEDRETVYAWFTFSHWLVYANSAANPIIYNFLSGKFREEFKAAFSCCCLGVHHRQEDRLARGRTSTESRKSLTTQISNFDNISKLSEQVLLTSMSTLPAANGAGQLQNW.

Residues 1-10 (MSGTKLEDSP) show a composition bias toward basic and acidic residues. Residues 1–30 (MSGTKLEDSPPCRNWSSAPELNETQEPFLN) form a disordered region. At 1–54 (MSGTKLEDSPPCRNWSSAPELNETQEPFLNPTDYDDEEFLRYLWREYLHPKEYE) the chain is on the extracellular side. Asparagine 14 and asparagine 22 each carry an N-linked (GlcNAc...) asparagine glycan. Positions 14–27 (NWSSAPELNETQEP) are enriched in polar residues. The tract at residues 33-49 (DYDDEEFLRYLWREYLH) is required for response to orexin-A. Residues 55-75 (WVLIAGYIIVFVVALIGNVLV) traverse the membrane as a helical segment. Topologically, residues 76–88 (CVAVWKNHHMRTV) are cytoplasmic. Residues 89–110 (TNYFIVNLSLADVLVTITCLPA) traverse the membrane as a helical segment. At 111–127 (TLVVDITETWFFGQSLC) the chain is on the extracellular side. A disulfide bridge connects residues cysteine 127 and cysteine 210. The helical transmembrane segment at 128–150 (KVIPYLQTVSVSVSVLTLSCIAL) threads the bilayer. At 151–170 (DRWYAICHPLMFKSTAKRAR) the chain is on the cytoplasmic side. Residues 171 to 191 (NSIVIIWIVSCIIMIPQAIVM) traverse the membrane as a helical segment. Residues 192 to 222 (ECSTMLPGLANKTTLFTVCDERWGGEIYPKM) lie on the Extracellular side of the membrane. The N-linked (GlcNAc...) asparagine glycan is linked to asparagine 202. Residues 223 to 243 (YHICFFLVTYMAPLCLMVLAY) traverse the membrane as a helical segment. Over 244 to 304 (LQIFRKLWCR…QIRARRKTAR (61 aa)) the chain is Cytoplasmic. A helical membrane pass occupies residues 305–326 (MLMVVLLVFAICYLPISILNVL). The Extracellular portion of the chain corresponds to 327–342 (KRVFGMFTHTEDRETV). A helical membrane pass occupies residues 343–366 (YAWFTFSHWLVYANSAANPIIYNF). Over 367-444 (LSGKFREEFK…ANGAGQLQNW (78 aa)) the chain is Cytoplasmic.

This sequence belongs to the G-protein coupled receptor 1 family.

It is found in the cell membrane. In terms of biological role, nonselective, high-affinity receptor for both orexin-A and orexin-B neuropeptides. Triggers an increase in cytoplasmic Ca(2+) levels in response to orexin-A binding. This is Orexin receptor type 2 (HCRTR2) from Sus scrofa (Pig).